The sequence spans 1652 residues: Maestro heat-like repeat-containing protein family member 1 (1652 aa).

HEAT repeat units follow at residues 3-41 (ETYAKRLSAILLDAVTDKDPQMQEQVCGALCDFGESKPA), 260-300 (EEQL…VGSR), 344-382 (CCSPDRLLAFLLPKLDTSNERTRVGTLQVLRHVINAAAA), 385-423 (EVKKPVILSSMKLPLLDTNNKVKRAVVQVVSAMAHHGYL), 1369-1407 (LMLLESLLYNLMARQKDTSARVRRLVLHGLANITLGSPD), 1410-1448 (QTHSPQLLTAMIGGLDDGDDPHSLVALEAMVGLARLMDL), and 1616-1652 (QVDLEQLLTALQLLLKDPALKVRLKAVKTLGRLVKFA).

Belongs to the MROH1 family. As to quaternary structure, homooligomer; homooligomerizes at lysosome scission sites.

Its subcellular location is the lysosome membrane. In terms of biological role, lysosome fission factor. Recruited to lysosomes by RAB7 (RAB7A or RAB7B) at scission sites and homooligomerizes to mediate the constriction and scission of lysosomal tubules. May sever membranes by inserting amphipathic helices into one bilayer leaflet. Lysosome fission is required to maintain their steady-state number, shape, size, composition and function, and to accomplish regeneration. The sequence is that of Maestro heat-like repeat-containing protein family member 1 (MROH1) from Bos taurus (Bovine).